Here is a 1992-residue protein sequence, read N- to C-terminus: MALTVCVRHLTGLPGTHDRQVRLCFRGFTQKTRKIHCGREADVGELFRWPHYGSPLAGESLSVQVVNCSRVFSPRPLGTLVISLQQLQSAGHLVLREALVDERLRVSPIQVELDLKYQPPEGAAGTWAEEDFGTPIRDSLELIIPNVGFQDMEPGEAQLERRAVALGRRLARSLGTQDDEENELELEPELEEEPDVEISGVVFSPLKSRALGLPRGDPFKVCKAQDFQVGVTVLEAQKLVGVNINPYVAVRVGDQRKVTATLRGTNCPFYNEYFLFEFHETRLHLQDLLLEITAFHSQTLPFMATRIGTFRMDLGMALDQPDGHFHQKWAPLHDPRDTRAGTKGFVKITLSVRARGDLPLPPPPPCPGTSSDIEKNLLLPHGVQAERPWARLRVRVYRAEGLPTVRTGLLGSLARALHDQNVLLDPYVRVSFLGQQGETSVRGEETAPKWNEQLSFVELFPPLTRSLRLQLRDNAPLVDVALATHVLDLRQISNSGRAAGFNPTFGPAWVPLYGSLPSGRLRDDLQSLNEGLGEGIWFRGRLLVAVSMEVYEGRVEPKPSQTTQRSGLSRLTGKKKKKKEKTRQGQTPAGILQPASASTSEDAPEIPSAMEVEVEDLLPLPENALASFEDFLLFGVLFEATMIDPSLAKKPISLEISIGHAGRQEEQSGQGSRADEGSESSTLEVQPLLESEDRGAGQEEQELLGTPAQWPEPVDGNGPYLCLPLRHRKPCLHVWSCWEDYTWRLQSSNSVCKVAERLDHGLQEVEKMQRRSGPGACTRLKQTLEELVAGSRQFCHGAERRTMTRPNALDRCRAKLLTHSLNLMARQGLRLLRSLRLNNMQRTVVLAKKLLARLRFLAQEPQPPLPDVLVWMFSGQRRVAYARIPAQDILYSVVEEERGRDCGKIQSLLLTVPGAAPGEVCAKLELFLWLGLGKQAKACTSELPMDLLPEPSSGLPQSLYRDDFRYFQLRAHLYQARGVLAADDSGLSDPFARVLISTQCQTTRVLEQTLSPLWDELLVFDQLIVDGRREHLREEPPLVVINVFDHNKFGPAVFLGRAFAAPRVKLIEDPYQRPELQFFPLRKGPQAAGEVIATFELIELDYSGHLEPSVPSDVEPRDLASLVEPISGHLSLPPSVRPVLRAFRVEVLFWGLRGLGRVHLFEIEKPQVVLEVAGRRVESEVLPNYRENPNFTELVRHVTVDLPEQPYLQPPLSILVIERRAFGRTVLVGSHIVPHMLRFILQGHEDPQEEEETEEETRDLVPHGPQGEKSLPEAGTSRQLLKAPLKKLTLGLLGQGPELEEDIPDPEEMDWWSKYYASLQEFQGQPSSDDEMDEAGDADGTHLISGDREAQEQGETDSKVSVPRKKAIATLKIYNSSLEDEFSHFEDWLSVFPLYRGQGGQDGEGEGASGHFVGKFKGSFLIYPESEAKSFSEPQISRGVPQNRPIKLLVRVYIVKATNLAPADPNGKADPYVVVSAGKEQRDTKERYIPKQLNPIFGEVLELSVSLPAQPELTVAVFDHDLVGSDDLIGETHIDLENRFYSHHRANCGLASQYDVNGYNAWRDAFRPSQILAGLCQRCGLPVPEYRAGAVKVGSRVFLTPSEAPPPDDRKPKVTSEASEEAQALHVLRRWQEMPGLGIQLVPEHVETRPLYHPRSPGLLQGSLHMWIDIFPSDVPAPPPVDIKPRQPISYELRVVIWNTDDVALDDVNPLTGERSSDIYVKSWVKGLEQDRQETDVHFNSLTGEGNFNWRFVFRFDYLPTEREVSVRRKPGPFALEEAEFRQPAVLVLQVWDYDRISANDFLGSLELQLPDMVRGARDPEHCSVRLALDGAGPRCNLFRCHRLRGWWPVVKMKDMEDVEREAREAQAGKKRKRKRRAGRPEDLEFTDTGGNVYILTGKVEAEFELLTVEEAEKRPVGKGRKEPEPLEKPNRPKTSFNWFVNPLKTFIFFIWRRYWRILVLLLLALITIFLLLVFYTIPGQISEVIFSPVHK.

3 consecutive C2 domains span residues 1-97, 214-330, and 369-502; these read MALT…VLRE, PRGD…QKWA, and TSSD…AGFN. Residues 1 to 1952 lie on the Extracellular side of the membrane; that stretch reads MALTVCVRHL…PLKTFIFFIW (1952 aa). 3 disordered regions span residues 554 to 606, 661 to 686, and 691 to 710; these read RVEP…APEI, AGRQ…LEVQ, and SEDR…PAQW. Positions 559-569 are enriched in polar residues; sequence PSQTTQRSGLS. Residues 572 to 581 show a composition bias toward basic residues; the sequence is TGKKKKKKEK. C2 domains are found at residues 951-1078 and 1126-1250; these read PSSG…ELQF and ISGH…PQEE. Disordered regions lie at residues 1245 to 1276 and 1322 to 1361; these read EDPQ…EAGT and FQGQ…SKVS. Acidic residues-rich tracts occupy residues 1247–1257 and 1328–1337; these read PQEEEETEEET and SDDEMDEAGD. C2 domains are found at residues 1430–1549 and 1675–1824; these read SFSE…ANCG and VPAP…EHCS. Aspartate 1464, aspartate 1470, aspartate 1519, aspartate 1521, aspartate 1527, aspartate 1795, serine 1798, and aspartate 1801 together coordinate Ca(2+). Residues 1862–1885 are disordered; that stretch reads EAREAQAGKKRKRKRRAGRPEDLE. Basic residues predominate over residues 1869–1878; it reads GKKRKRKRRA. The chain crosses the membrane as a helical span at residues 1953–1973; sequence RRYWRILVLLLLALITIFLLL. Residues 1974 to 1992 are Cytoplasmic-facing; the sequence is VFYTIPGQISEVIFSPVHK.

Ca(2+) serves as cofactor.

It is found in the membrane. The sequence is that of Fer-1-like protein 4 (Fer1l4) from Mus musculus (Mouse).